Reading from the N-terminus, the 421-residue chain is 4-methylaminobutanoate oxidase (methylamine-forming) (421 aa).

FAD is bound by residues Glu31, Arg33, Arg39, and Glu379.

This sequence belongs to the flavin monoamine oxidase family. Monomer. It depends on FAD as a cofactor.

The enzyme catalyses 4-(methylamino)butanoate + O2 + H2O = succinate semialdehyde + methylamine + H2O2. Its pathway is alkaloid degradation; nicotine degradation. Functionally, catalyzes the removal of methylamine from 4-methylaminobutanoate with the formation of succinate semialdehyde. Is involved in the catabolism of 4-methylaminobutanoate produced from nicotine. Has a very weak monoamine oxidase activity with 4-aminobutanoate. Cannot use spermidine, spermine, sarcosine, dimethylglycine, glycine, choline, betaine, alpha-methylamino isobutyrate, methylamine propionitrile and methylamino propylamine as substrate. The sequence is that of 4-methylaminobutanoate oxidase (methylamine-forming) (mao) from Paenarthrobacter nicotinovorans (Arthrobacter nicotinovorans).